A 384-amino-acid chain; its full sequence is Queuine tRNA-ribosyltransferase (384 aa).

Asp-92 (proton acceptor) is an active-site residue. Substrate-binding positions include 92 to 96 (DSGGF), Asp-146, Gln-190, and Gly-217. Positions 248-254 (GVGRPED) are RNA binding. Asp-267 serves as the catalytic Nucleophile. An RNA binding; important for wobble base 34 recognition region spans residues 272-276 (TRHAR). The Zn(2+) site is built by Cys-305, Cys-307, Cys-310, and His-337.

The protein belongs to the queuine tRNA-ribosyltransferase family. Homodimer. Within each dimer, one monomer is responsible for RNA recognition and catalysis, while the other monomer binds to the replacement base PreQ1. It depends on Zn(2+) as a cofactor.

It carries out the reaction 7-aminomethyl-7-carbaguanine + guanosine(34) in tRNA = 7-aminomethyl-7-carbaguanosine(34) in tRNA + guanine. Its pathway is tRNA modification; tRNA-queuosine biosynthesis. Catalyzes the base-exchange of a guanine (G) residue with the queuine precursor 7-aminomethyl-7-deazaguanine (PreQ1) at position 34 (anticodon wobble position) in tRNAs with GU(N) anticodons (tRNA-Asp, -Asn, -His and -Tyr). Catalysis occurs through a double-displacement mechanism. The nucleophile active site attacks the C1' of nucleotide 34 to detach the guanine base from the RNA, forming a covalent enzyme-RNA intermediate. The proton acceptor active site deprotonates the incoming PreQ1, allowing a nucleophilic attack on the C1' of the ribose to form the product. After dissociation, two additional enzymatic reactions on the tRNA convert PreQ1 to queuine (Q), resulting in the hypermodified nucleoside queuosine (7-(((4,5-cis-dihydroxy-2-cyclopenten-1-yl)amino)methyl)-7-deazaguanosine). This chain is Queuine tRNA-ribosyltransferase, found in Xylella fastidiosa (strain M12).